The following is a 369-amino-acid chain: Protein phosphatase 1 regulatory inhibitor subunit PPP1R8 homolog (369 aa).

Positions 1-11 (MYGRSGLDRFK) are enriched in basic and acidic residues. Residues 1–26 (MYGRSGLDRFKKSQTSEPFSVSANPP) form a disordered region. Positions 13-23 (SQTSEPFSVSA) are enriched in polar residues. Residues 87-138 (HIFGRQHQTCDFVLDHQSVSRQHAAVVPHKNGSIFVIDLGSAHGTFVANERL) form the FHA domain. Residues 345–369 (VSQPAAETECGGVGEEDDNDDLFGD) are disordered. A compositionally biased stretch (acidic residues) spans 358–369 (GEEDDNDDLFGD).

In terms of assembly, interacts with human protein phosphatase PPP1C.

Inhibitor of protein-phosphatase 1 (PP1). Binds to and inhibits PP1 activity. In Arabidopsis thaliana (Mouse-ear cress), this protein is Protein phosphatase 1 regulatory inhibitor subunit PPP1R8 homolog.